A 160-amino-acid polypeptide reads, in one-letter code: Cytochrome b6-f complex subunit 4 (160 aa).

Transmembrane regions (helical) follow at residues 36-56 (LLYMFPVCILGTIACNVGLAV), 95-115 (LLGVLLMASVPVGLITVPFIE), and 131-151 (TIFLIGTVVAVWLGIGATLPI).

This sequence belongs to the cytochrome b family. PetD subfamily. As to quaternary structure, the 4 large subunits of the cytochrome b6-f complex are cytochrome b6, subunit IV (17 kDa polypeptide, petD), cytochrome f and the Rieske protein, while the 4 small subunits are petG, petL, petM and petN. The complex functions as a dimer.

Its subcellular location is the plastid. The protein localises to the chloroplast thylakoid membrane. Functionally, component of the cytochrome b6-f complex, which mediates electron transfer between photosystem II (PSII) and photosystem I (PSI), cyclic electron flow around PSI, and state transitions. In Staurastrum punctulatum (Green alga), this protein is Cytochrome b6-f complex subunit 4.